The following is a 317-amino-acid chain: UV DNA damage endonuclease (317 aa).

This sequence belongs to the uve1/UvsE family.

Functionally, component in a DNA repair pathway. Removal of UV LIGHT damaged nucleotides. Recognizes pyrimidine dimers and cleave a phosphodiester bond immediately 5' to the lesion. The chain is UV DNA damage endonuclease from Bacillus cereus (strain B4264).